Here is a 133-residue protein sequence, read N- to C-terminus: Profilin-3 (133 aa).

It belongs to the profilin family. As to quaternary structure, occurs in many kinds of cells as a complex with monomeric actin in a 1:1 ratio.

It is found in the cytoplasm. Its subcellular location is the cytoskeleton. Its function is as follows. Binds to actin and affects the structure of the cytoskeleton. At high concentrations, profilin prevents the polymerization of actin, whereas it enhances it at low concentrations. By binding to PIP2, it inhibits the formation of IP3 and DG. This is Profilin-3 from Ambrosia artemisiifolia (Common ragweed).